We begin with the raw amino-acid sequence, 252 residues long: Probable phosphatase Shewmr4_2619 (252 aa).

The Zn(2+) site is built by histidine 8, histidine 10, histidine 16, histidine 41, glutamate 74, histidine 102, histidine 132, aspartate 193, and histidine 195.

The protein belongs to the PHP family. Zn(2+) serves as cofactor.

The protein is Probable phosphatase Shewmr4_2619 of Shewanella sp. (strain MR-4).